The chain runs to 421 residues: Lipid II:glycine glycyltransferase (421 aa).

This sequence belongs to the FemABX family. Monomer.

It localises to the cytoplasm. It catalyses the reaction beta-D-GlcNAc-(1-&gt;4)-Mur2Ac(oyl-L-Ala-D-isoglutaminyl-L-Lys-D-Ala-D-Ala)-di-trans,octa-cis-undecaprenyl diphosphate + glycyl-tRNA(Gly) = beta-D-GlcNAc-(1-&gt;4)-Mur2Ac(oyl-L-Ala-D-isoglutaminyl-L-Lys-(N(6)-Gly)-D-Ala-D-Ala)-di-trans,octa-cis-undecaprenyl diphosphate + tRNA(Gly) + H(+). Its function is as follows. Catalyzes the incorporation of the first glycine of the pentaglycine interpeptide bridge, which is characteristic of the S.aureus peptidoglycan. This glycine is added to the epsilon-amino group of the L-lysine of the membrane-bound lipid II intermediate (GlcNAc-(beta-1,4)-N-acetylmuramic acid(-L-Ala-D-iGln-L-Lys-D-Ala-D-Ala)-pyrophosphoryl-undecaprenol), using glycyl-tRNA(Gly) as donor, in a ribosome-independent mechanism. The sequence is that of Lipid II:glycine glycyltransferase (femX) from Staphylococcus aureus (strain MSSA476).